A 147-amino-acid polypeptide reads, in one-letter code: UPF0306 protein YhbP (147 aa).

Belongs to the UPF0306 family.

In Salmonella paratyphi A (strain AKU_12601), this protein is UPF0306 protein YhbP.